We begin with the raw amino-acid sequence, 619 residues long: Hypermethylated in cancer 2 protein (619 aa).

Positions 46-109 (CDVIIMVENS…IYTGKLLPSD (64 aa)) constitute a BTB domain. Serine 166, serine 169, and serine 197 each carry phosphoserine. Disordered stretches follow at residues 180-293 (DVRK…VGNS) and 307-426 (MDVE…GHTG). Over residues 214 to 228 (LGLGGPAGGEMGLGG) the composition is skewed to gly residues. Residues 247–249 (DLS) form a binding to CtBP region. The span at 281–293 (APTSTSALPVGNS) shows a compositional bias: polar residues. Positions 337–357 (KKDWNKKEPVAGSPFDRRETG) are enriched in basic and acidic residues. A phosphoserine mark is found at serine 349 and serine 416. 5 C2H2-type zinc fingers span residues 446–468 (YVCI…VETH), 509–531 (FKCS…EKTH), 537–559 (FPCN…MRSH), 565–587 (FACD…MRVH), and 593–615 (YECQ…LRMH).

This sequence belongs to the krueppel C2H2-type zinc-finger protein family. Hic subfamily. As to quaternary structure, self-associates. Interacts with HIC1.

Its subcellular location is the nucleus. Transcriptional repressor. In Mus musculus (Mouse), this protein is Hypermethylated in cancer 2 protein (Hic2).